The chain runs to 391 residues: Sulfate adenylyltransferase (391 aa).

This sequence belongs to the sulfate adenylyltransferase family.

The catalysed reaction is sulfate + ATP + H(+) = adenosine 5'-phosphosulfate + diphosphate. It participates in sulfur metabolism; hydrogen sulfide biosynthesis; sulfite from sulfate: step 1/3. The polypeptide is Sulfate adenylyltransferase (Lactiplantibacillus plantarum (strain ATCC BAA-793 / NCIMB 8826 / WCFS1) (Lactobacillus plantarum)).